Here is a 305-residue protein sequence, read N- to C-terminus: tRNA pseudouridine synthase B (305 aa).

The active-site Nucleophile is Asp-41.

It belongs to the pseudouridine synthase TruB family. Type 1 subfamily.

It carries out the reaction uridine(55) in tRNA = pseudouridine(55) in tRNA. Responsible for synthesis of pseudouridine from uracil-55 in the psi GC loop of transfer RNAs. The polypeptide is tRNA pseudouridine synthase B (Prochlorococcus marinus subsp. pastoris (strain CCMP1986 / NIES-2087 / MED4)).